Here is a 3431-residue protein sequence, read N- to C-terminus: KICSTOR complex protein SZT2 (3431 aa).

Disordered regions lie at residues 699–731, 1067–1101, and 1162–1231; these read SKEPTPKVKRKGLGGVGGSSPSKSPPTLGPQQA, LRDPGPEGPPVGGHAVAKDRAGNSTQASGDSTLPS, and KPKL…GADG. The mediates interaction with the GATOR1 complex stretch occupies residues 1082–1188; the sequence is VAKDRAGNST…ATGTKATESQ (107 aa). 2 stretches are compositionally biased toward polar residues: residues 1088 to 1101 and 1182 to 1212; these read GNSTQASGDSTLPS and TKATESQVPTLSVTLASDSAQDSGEPSTPSC. Ser1275 is modified (phosphoserine). The tract at residues 1356-1378 is disordered; it reads PPSPGPLSPGPFSSSIEEGPEPR. Position 1415 is a phosphoserine (Ser1415). Disordered regions lie at residues 1512 to 1534, 1629 to 1678, 1806 to 1883, 2113 to 2148, 2450 to 2512, 2735 to 2756, and 2866 to 2899; these read YRESREPDLGPAGLDSASLSDAD, PPAS…HPGL, RAED…PGET, PPSLALSRSQEPISSEDSVAPRSPLDMASSRSSDAV, TEAG…LEEG, ASPPLSREQGRLSGSSRGGGPL, and ETCAPSEGQRRPCPESGSGSREVPTSCESLDVPP. Thr1640 is subject to Phosphothreonine. Over residues 1641 to 1657 the composition is skewed to polar residues; sequence SESSASFPRSPGQPSSL. At Ser1650 the chain carries Phosphoserine. Residues 1832-1854 are compositionally biased toward low complexity; sequence PLISLPSLSQGGSQPGPSRGLSL. Positions 2118–2129 are enriched in polar residues; it reads LSRSQEPISSED. Basic and acidic residues predominate over residues 2460–2473; sequence TTDDIVLDRPEDTR. Positions 2739–2749 are enriched in low complexity; the sequence is LSREQGRLSGS.

In terms of assembly, part of the KICSTOR complex composed of KPTN, ITFG2, KICS2 and SZT2. SZT2 probably serves as a link between the other three proteins in the KICSTOR complex and may mediate the direct interaction with the GATOR complex via GATOR1. The KICSTOR complex interacts directly with the GATOR1 complex and most probably indirectly with the GATOR2 complex in an amino acid-independent manner. Mostly expressed in brain, spinal cord and lung.

Its subcellular location is the lysosome membrane. It localises to the peroxisome. Functionally, as part of the KICSTOR complex functions in the amino acid-sensing branch of the TORC1 signaling pathway. Recruits, in an amino acid-independent manner, the GATOR1 complex to the lysosomal membranes and allows its interaction with GATOR2 and the RAG GTPases. Functions upstream of the RAG GTPases and is required to negatively regulate mTORC1 signaling in absence of amino acids. In absence of the KICSTOR complex mTORC1 is constitutively localized to the lysosome and activated. The KICSTOR complex is also probably involved in the regulation of mTORC1 by glucose. May play a role in the cellular response to oxidative stress. This is KICSTOR complex protein SZT2 from Mus musculus (Mouse).